We begin with the raw amino-acid sequence, 288 residues long: Thymidylate synthase (288 aa).

Arg-21 provides a ligand contact to dUMP. His-51 contacts (6R)-5,10-methylene-5,6,7,8-tetrahydrofolate. Residue 150 to 151 (RR) participates in dUMP binding. Cys-170 acts as the Nucleophile in catalysis. DUMP contacts are provided by residues 190-193 (RSGD), Asn-201, and 231-233 (HIY). Asp-193 contributes to the (6R)-5,10-methylene-5,6,7,8-tetrahydrofolate binding site. (6R)-5,10-methylene-5,6,7,8-tetrahydrofolate is bound at residue Ala-287.

This sequence belongs to the thymidylate synthase family. Bacterial-type ThyA subfamily. In terms of assembly, homodimer.

The protein localises to the cytoplasm. It catalyses the reaction dUMP + (6R)-5,10-methylene-5,6,7,8-tetrahydrofolate = 7,8-dihydrofolate + dTMP. It participates in pyrimidine metabolism; dTTP biosynthesis. Catalyzes the reductive methylation of 2'-deoxyuridine-5'-monophosphate (dUMP) to 2'-deoxythymidine-5'-monophosphate (dTMP) while utilizing 5,10-methylenetetrahydrofolate (mTHF) as the methyl donor and reductant in the reaction, yielding dihydrofolate (DHF) as a by-product. This enzymatic reaction provides an intracellular de novo source of dTMP, an essential precursor for DNA biosynthesis. This chain is Thymidylate synthase, found in Mycoplasma mobile (strain ATCC 43663 / 163K / NCTC 11711) (Mesomycoplasma mobile).